A 1365-amino-acid chain; its full sequence is Homeotic protein spalt-major (1365 aa).

Disordered regions lie at residues 47–194, 270–298, and 322–363; these read SADK…EVTL, QAKQ…EEEE, and LINA…NTHK. Composition is skewed to low complexity over residues 63–76 and 87–99; these read SPLT…SPSR and EQST…PEQS. The segment covering 103–117 has biased composition (basic and acidic residues); it reads HQLENDIKSEAKSEI. Over residues 146–157 the composition is skewed to low complexity; that stretch reads PSSPVAEASAEE. Residues 159-181 are compositionally biased toward basic and acidic residues; sequence ATERTPEKEKEKDVEVDVEKPDE. Acidic residues predominate over residues 275–298; it reads EDTEEDADQEQDQEQETDTYEEEE. A compositionally biased stretch (basic and acidic residues) spans 346-363; that stretch reads HDHESQPNRRPSLDNTHK. 2 consecutive C2H2-type zinc fingers follow at residues 451–473 and 479–501; these read HRCR…IRSH and FKCN…FQRH. Disordered stretches follow at residues 508-554 and 586-716; these read VPMN…ASFP and ELPT…TPGQ. The span at 530 to 539 shows a compositional bias: polar residues; that stretch reads MSPTDSSPNH. A compositionally biased stretch (pro residues) spans 540-554; that stretch reads SPAPPPLGSAPASFP. Composition is skewed to basic and acidic residues over residues 603-622 and 638-662; these read PQVK…HEQE and VRIK…EPRR. 2 positions are modified to phosphoserine: Ser739 and Ser744. The interval 740-772 is disordered; it reads PEHHSPVRSPAGGALPPGVPPPPHHHPHHMARS. 3 consecutive C2H2-type zinc fingers follow at residues 824–846, 852–874, and 884–906; these read NQCV…YRTH, FKCR…MAVH, and HQCP…IRLH. Disordered stretches follow at residues 948–1012, 1030–1129, and 1146–1241; these read ALPG…RSGD, VVNT…ILTS, and HHLQ…GARP. A compositionally biased stretch (acidic residues) spans 976-991; that stretch reads DMDDNMDCGEDYDDDV. Residues 1040–1054 are compositionally biased toward low complexity; sequence SSASSHGHSVGSTSA. A compositionally biased stretch (polar residues) spans 1055 to 1079; sequence PTSPSVHASSQVIKRSSSPARSEAS. Residues Ser1076 and Ser1079 each carry the phosphoserine modification. 3 stretches are compositionally biased toward low complexity: residues 1085-1100, 1114-1123, and 1146-1168; these read LTPR…SRSP, RSPSGSSHAS, and HHLQ…AAAA. Residues 1181-1191 show a composition bias toward basic and acidic residues; sequence QHQEQLRREAA. A compositionally biased stretch (low complexity) spans 1192–1218; it reads EAQQKAAAAAAAAAAAAAAQRQTPPQA. C2H2-type zinc fingers lie at residues 1289–1311 and 1317–1339; these read TTCG…YRSH and FKCS…MLTH.

It belongs to the sal C2H2-type zinc-finger protein family.

It is found in the nucleus. Its function is as follows. Required for the establishment of the posterior-most head and the anterior-most tail segments of the embryo. Probably function as a transcriptional regulator. Could repress the transcription of the tsh gene. In Drosophila melanogaster (Fruit fly), this protein is Homeotic protein spalt-major (salm).